We begin with the raw amino-acid sequence, 134 residues long: T-cell receptor beta chain V region CTL-F3 (134 aa).

The first 19 residues, 1–19, serve as a signal peptide directing secretion; sequence MAPRLLFCLVLCFLRAEPT. Positions 20–115 are v segment; it reads NAGVIQTPRH…SAVYLCASSL (96 aa). The cysteines at positions 42 and 111 are disulfide-linked. An N-linked (GlcNAc...) asparagine glycan is attached at asparagine 90. The d segment stretch occupies residues 116-119; that stretch reads STGV. Residues 120–134 form a j segment region; the sequence is SYEQYFGPGTRLTVL.

The polypeptide is T-cell receptor beta chain V region CTL-F3 (Mus musculus (Mouse)).